The chain runs to 264 residues: Apolipoprotein A-I (264 aa).

The first 18 residues, Met1–Ala18, serve as a signal peptide directing secretion. Tandem repeats lie at residues Leu67–Gly88 and Pro89–Asn110. The tract at residues Leu67–Gln264 is 10 X approximate tandem repeats. The residue at position 109 (Met109) is a Methionine sulfoxide. A 3; half-length repeat occupies Lys111 to Gln121. A run of 3 repeats spans residues Pro122–Glu143, Pro144–Ser165, and Pro166–Ala187. A 7; truncated repeat occupies Pro188–Gly207. Copy 8 of the repeat occupies Ser208–Lys229. One copy of the 9; half-length repeat lies at Pro230–Leu240. The stretch at Pro241 to Gln264 is repeat 10.

Belongs to the apolipoprotein A1/A4/E family. Homodimer. Interacts with APOA1BP and CLU. Component of a sperm activating protein complex (SPAP), consisting of APOA1, an immunoglobulin heavy chain, an immunoglobulin light chain and albumin. Interacts with NDRG1. Interacts with SCGB3A2. Interacts with NAXE and YJEFN3. Glycosylated. Post-translationally, palmitoylated. In terms of processing, phosphorylation sites are present in the extracellular medium.

It is found in the secreted. Functionally, participates in the reverse transport of cholesterol from tissues to the liver for excretion by promoting cholesterol efflux from tissues and by acting as a cofactor for the lecithin cholesterol acyltransferase (LCAT). As part of the SPAP complex, activates spermatozoa motility. The chain is Apolipoprotein A-I (APOA1) from Ictidomys tridecemlineatus (Thirteen-lined ground squirrel).